The primary structure comprises 203 residues: Large ribosomal subunit protein bL25 (203 aa).

Belongs to the bacterial ribosomal protein bL25 family. CTC subfamily. As to quaternary structure, part of the 50S ribosomal subunit; part of the 5S rRNA/L5/L18/L25 subcomplex. Contacts the 5S rRNA. Binds to the 5S rRNA independently of L5 and L18.

Functionally, this is one of the proteins that binds to the 5S RNA in the ribosome where it forms part of the central protuberance. This Cupriavidus pinatubonensis (strain JMP 134 / LMG 1197) (Cupriavidus necator (strain JMP 134)) protein is Large ribosomal subunit protein bL25.